Reading from the N-terminus, the 863-residue chain is Protein ARG5,6, mitochondrial (863 aa).

The N-terminal 65 residues, 1-65 (MPSASLLVST…RYVSSTNGFS (65 aa)), are a transit peptide targeting the mitochondrion. The N-acetyltransferase domain occupies 353–505 (KLVKRSSIGE…NFVKSCDTAS (153 aa)). Ser-359 carries the phosphoserine modification. Cys-675 is a catalytic residue.

It in the N-terminal section; belongs to the acetylglutamate kinase family. The protein in the C-terminal section; belongs to the NAGSA dehydrogenase family. The protein precursor is cleaved into the two biologically active enzymes, the kinase and the reductase.

It localises to the mitochondrion. It catalyses the reaction N-acetyl-L-glutamate 5-semialdehyde + phosphate + NADP(+) = N-acetyl-L-glutamyl 5-phosphate + NADPH + H(+). The enzyme catalyses N-acetyl-L-glutamate + ATP = N-acetyl-L-glutamyl 5-phosphate + ADP. It participates in amino-acid biosynthesis; L-arginine biosynthesis; N(2)-acetyl-L-ornithine from L-glutamate: step 2/4. The protein operates within amino-acid biosynthesis; L-arginine biosynthesis; N(2)-acetyl-L-ornithine from L-glutamate: step 3/4. With respect to regulation, the kinase activity is inhibited by arginine. This Saccharomyces cerevisiae (strain ATCC 204508 / S288c) (Baker's yeast) protein is Protein ARG5,6, mitochondrial (ARG5,6).